The chain runs to 88 residues: Small ribosomal subunit protein bS16 (88 aa).

This sequence belongs to the bacterial ribosomal protein bS16 family.

The polypeptide is Small ribosomal subunit protein bS16 (Syntrophomonas wolfei subsp. wolfei (strain DSM 2245B / Goettingen)).